A 203-amino-acid polypeptide reads, in one-letter code: ADP-ribosylation factor-like protein 6-interacting protein 1 (203 aa).

Residues 1 to 41 (MAEGDNRSSNLLAAETASLEEQLQGWGEVMLMADKVLRWER) lie on the Cytoplasmic side of the membrane. A helical transmembrane segment spans residues 42–62 (AWFPPAIMGVVSLVFLIIYYL). Over 63 to 65 (DPS) the chain is Lumenal. The chain crosses the membrane as a helical span at residues 66 to 86 (VLSGVSCFVMFLCLADYLVPI). Topologically, residues 87–133 (LAPRIFGSNKWTTEQQQRFHEICSNLVKTRRRAVGWWKRLFTLKEEK) are cytoplasmic. A helical membrane pass occupies residues 134–175 (PKMYFMTMIVSLAAVAWVGQQVHNLLLTYLIVTSLLLLPGLN). The Lumenal segment spans residues 176 to 203 (QHGIISKYIGMAKREINKLLKQKEKKNE).

The protein belongs to the ARL6ip family. Homooligomer. Heterodimer with ARL6IP5. Interacts with ATL1, TMEM33 and ARL6.

Its subcellular location is the endomembrane system. It localises to the endoplasmic reticulum membrane. It is found in the endoplasmic reticulum. Functionally, positively regulates SLC1A1/EAAC1-mediated glutamate transport by increasing its affinity for glutamate in a PKC activity-dependent manner. Promotes the catalytic efficiency of SLC1A1/EAAC1 probably by reducing its interaction with ARL6IP5, a negative regulator of SLC1A1/EAAC1-mediated glutamate transport. Plays a role in the formation and stabilization of endoplasmic reticulum tubules. Negatively regulates apoptosis, possibly by modulating the activity of caspase-9 (CASP9). Inhibits cleavage of CASP9-dependent substrates and downstream markers of apoptosis but not CASP9 itself. May be involved in protein transport, membrane trafficking, or cell signaling during hematopoietic maturation. In Pongo abelii (Sumatran orangutan), this protein is ADP-ribosylation factor-like protein 6-interacting protein 1 (ARL6IP1).